Here is a 2131-residue protein sequence, read N- to C-terminus: Sodium channel protein para (2131 aa).

At 1 to 148 (MTEDSDSISE…FNPIRRVAIY (148 aa)) the chain is on the cytoplasmic side. Positions 35–48 (HEKQKELERKRAEG) are enriched in basic and acidic residues. Residues 35–84 (HEKQKELERKRAEGEVPQYGRKKKQKEIRYDDEDEDEGPQPDPTLEQGVP) form a disordered region. A compositionally biased stretch (acidic residues) spans 64 to 73 (YDDEDEDEGP). The I repeat unit spans residues 134-467 (WMLDPFNPIR…AAKAAKLEER (334 aa)). The helical transmembrane segment at 149–172 (ILVHPLFSLFIITTILVNCILMIM) threads the bilayer. Residues 173–180 (PTTPTVES) are Extracellular-facing. A helical transmembrane segment spans residues 181–199 (TEVIFTGIYTFESAVKVMA). The Cytoplasmic portion of the chain corresponds to 200–212 (RGFILCPFTYLRD). The helical transmembrane segment at 213-231 (AWNWLDFVVIALAYVTMGI) threads the bilayer. The Extracellular segment spans residues 232–237 (DLGNLA). Residues 238-257 (ALRTFRVLRALKTVAIVPGL) form a helical; Voltage-sensor membrane-spanning segment. Residues 258–273 (KTIVGAVIESVKNLRD) are Cytoplasmic-facing. A helical transmembrane segment spans residues 274–297 (VIILTMFSLSVFALMGLQIYMGVL). At 298 to 373 (TQKCIKKFPL…PNYGYTSFDS (76 aa)) the chain is on the extracellular side. The cysteines at positions 301 and 350 are disulfide-linked. 3 N-linked (GlcNAc...) asparagine glycosylation sites follow: asparagine 313, asparagine 325, and asparagine 343. Positions 374–398 (FGWAFLSAFRLMTQDFWEDLYQLVL) form an intramembrane region, pore-forming. Residues 399 to 405 (RAAGPWH) are Extracellular-facing. Residues 406–427 (MLFFIVIIFLGSFYLVNLILAI) traverse the membrane as a helical segment. Topologically, residues 428–812 (VAMSYDELQK…VWLKFQEWVS (385 aa)) are cytoplasmic. Phosphoserine; by PKA is present on residues serine 553 and serine 570. Disordered stretches follow at residues 553–572 (STTSLSLPGSPFNIRRGSRS) and 671–691 (KESKLRNRNTRNQSVGATNGG). Polar residues predominate over residues 680–691 (TRNQSVGATNGG). One copy of the II repeat lies at 799–1069 (DCCWVWLKFQ…IAEAFNRIGR (271 aa)). Residues 813-837 (LIVFDPFVELFITLCIVVNTMFMAM) traverse the membrane as a helical segment. Topologically, residues 838–848 (DHHDMNKEMER) are extracellular. Residues 849–873 (VLKSGNYFFTATFAIEATMKLMAMS) form a helical membrane-spanning segment. Residues 874–880 (PKYYFQE) lie on the Cytoplasmic side of the membrane. Residues 881–900 (GWNIFDFIIVALSLLELGLE) form a helical membrane-spanning segment. Residues 901 to 906 (GVQGLS) are Extracellular-facing. A helical; Voltage-sensor transmembrane segment spans residues 907 to 926 (VLRSFRLLRVFKLAKSWPTL). The Cytoplasmic segment spans residues 927-941 (NLLISIMGRTMGALG). A helical membrane pass occupies residues 942-963 (NLTFVLCIIIFIFAVMGMQLFG). At 964–985 (KNYHDHKDRFPDGDLPRWNFTD) the chain is on the extracellular side. Residue asparagine 982 is glycosylated (N-linked (GlcNAc...) asparagine). The pore-forming intramembrane region spans 986–1006 (FMHSFMIVFRVLCGEWIESMW). Over 1007-1013 (DCMYVGD) the chain is Extracellular. An intrachain disulfide couples cysteine 1008 to cysteine 1016. The helical transmembrane segment at 1014–1041 (VSCIPFFLATVVIGNLVVLNLFLALLLS) threads the bilayer. Over 1042–1296 (NFGSSSLSAP…WGNLRLKTFQ (255 aa)) the chain is Cytoplasmic. A disordered region spans residues 1166 to 1240 (DMKNNKPKKS…LDEEGECEEG (75 aa)). Polar residues predominate over residues 1177 to 1194 (YLNNATDDDTASINSYGS). Basic and acidic residues predominate over residues 1199-1225 (PFKDESHKGSAETMEGEEKRDASKEDL). Over residues 1226 to 1240 (GLDEELDEEGECEEG) the composition is skewed to acidic residues. The stretch at 1284–1591 (WQGWGNLRLK…QKKYYNAMKK (308 aa)) is one III repeat. Residues 1297–1320 (LIENKYFETAVITMILMSSLALAL) traverse the membrane as a helical segment. The Extracellular segment spans residues 1321 to 1334 (EDVHLPQRPILQDI). A helical transmembrane segment spans residues 1335–1359 (LYYMDRIFTVIFFLEMLIKWLALGF). Over 1360-1365 (KVYFTN) the chain is Cytoplasmic. The chain crosses the membrane as a helical span at residues 1366–1387 (AWCWLDFVIVMVSLINFVASLV). Residues 1388-1391 (GAGG) lie on the Extracellular side of the membrane. The helical; Voltage-sensor transmembrane segment at 1392–1413 (IQAFKTMRTLRALRPLRAMSRM) threads the bilayer. Residues 1414–1432 (QGMRVVVNALVQAIPSIFN) lie on the Cytoplasmic side of the membrane. Residues 1433–1454 (VLLVCLIFWLIFAIMGVQLFAG) form a helical membrane-spanning segment. Topologically, residues 1455 to 1495 (KYFKCEDMNGTKLSHEIIPNRNACESENYTWVNSAMNFDHV) are extracellular. 2 N-linked (GlcNAc...) asparagine glycosylation sites follow: asparagine 1463 and asparagine 1482. Positions 1496–1517 (GNAYLCLFQVATFKGWIQIMND) form an intramembrane region, pore-forming. Topologically, residues 1518–1533 (AIDSREVDKQPIRETN) are extracellular. A helical membrane pass occupies residues 1534 to 1560 (IYMYLYFVFFIIFGSFFTLNLFIGVII). Residues 1561–1614 (DNFNEQKKKAGGSLEMFMTEDQKKYYNAMKKMGSKKPLKAIPRPRWRPQAIVFE) lie on the Cytoplasmic side of the membrane. The stretch at 1601 to 1862 (IPRPRWRPQA…NMYIAVILEN (262 aa)) is one IV repeat. Residues 1615–1638 (IVTDKKFDIIIMLFIGLNMFTMTL) form a helical membrane-spanning segment. Over 1639 to 1649 (DRYDASDTYNA) the chain is Extracellular. Residues 1650 to 1673 (VLDYLNAIFVVIFSSECLLKIFAL) form a helical membrane-spanning segment. Residues 1674–1679 (RYHYFI) are Cytoplasmic-facing. Residues 1680 to 1703 (EPWNLFDVVVVILSILGLVLSDII) form a helical membrane-spanning segment. Residues 1704–1713 (EKYFVSPTLL) lie on the Extracellular side of the membrane. The helical; Voltage-sensor transmembrane segment at 1714-1735 (RVVRVAKVGRVLRLVKGAKGIR) threads the bilayer. Topologically, residues 1736–1750 (TLLFALAMSLPALFN) are cytoplasmic. Residues 1751-1773 (ICLLLFLVMFIFAIFGMSFFMHV) traverse the membrane as a helical segment. Topologically, residues 1774–1787 (KEKSGINDVYNFKT) are extracellular. Positions 1788-1810 (FGQSMILLFQMSTSAGWDGVLDA) form an intramembrane region, pore-forming. Over 1811 to 1835 (IINEEACDPPDNDKGYPGNCGSATV) the chain is Extracellular. Residues 1836–1860 (GITFLLSYLVISFLIVINMYIAVIL) form a helical membrane-spanning segment. At 1861–2131 (ENYSQATEDV…PSITSRTADV (271 aa)) the chain is on the cytoplasmic side. The region spanning 1877–1912 (DDYDMYYEIWQQFDPEGTQYIRYDQLSEFLDVLEPP) is the EF-hand domain. The disordered stretch occupies residues 2001–2096 (HKARGEGGGS…GSPGAGSAGR (96 aa)). The span at 2021-2035 (GDPDAGDPAPDEATD) shows a compositional bias: acidic residues. Positions 2068 to 2088 (AAAAAAAAAAAAAAGTTTAGS) are enriched in low complexity.

The protein belongs to the sodium channel (TC 1.A.1.10) family. Para subfamily.

It is found in the cell membrane. Its function is as follows. Mediates the voltage-dependent sodium ion permeability of excitable membranes. Assuming opened or closed conformations in response to the voltage difference across the membrane, the protein forms a sodium-selective channel through which Na(+) ions may pass in accordance with their electrochemical gradient. This is Sodium channel protein para (para) from Drosophila melanogaster (Fruit fly).